The sequence spans 779 residues: Protocadherin beta-8 (779 aa).

Residues methionine 1–serine 28 form the signal peptide. Topologically, residues glutamate 29 to leucine 690 are extracellular. Cadherin domains are found at residues leucine 75 to phenylalanine 133, proline 134 to phenylalanine 242, leucine 243 to leucine 346, threonine 347 to phenylalanine 450, and threonine 451 to valine 560. A disulfide bond links cysteine 96 and cysteine 102. N-linked (GlcNAc...) asparagine glycosylation occurs at asparagine 169. A glycan (O-linked (Man) serine) is linked at serine 223. O-linked (Man) threonine glycans are attached at residues threonine 225 and threonine 227. A glycan (N-linked (GlcNAc...) asparagine) is linked at asparagine 417. An N-linked (GlcNAc...) asparagine glycan is attached at asparagine 566. A Cadherin 6 domain is found at leucine 575–valine 675. The helical transmembrane segment at valine 691–valine 711 threads the bilayer. Residues lysine 712–serine 779 lie on the Cytoplasmic side of the membrane.

In terms of assembly, forms homodimers in trans (molecules expressed by two different cells). Forms promiscuous heterodimers in cis (at the plasma membrane of the same cell) with other protocadherins.

It is found in the cell membrane. Its function is as follows. Calcium-dependent cell-adhesion protein involved in cells self-recognition and non-self discrimination. Thereby, it is involved in the establishment and maintenance of specific neuronal connections in the brain. The chain is Protocadherin beta-8 from Mus musculus (Mouse).